A 200-amino-acid chain; its full sequence is uncharacterized protein (200 aa).

This sequence belongs to the HAD-like hydrolase superfamily. CbbY/CbbZ/Gph/YieH family.

This is an uncharacterized protein from Haemophilus influenzae (strain ATCC 51907 / DSM 11121 / KW20 / Rd).